Consider the following 178-residue polypeptide: Small ribosomal subunit protein uS4 (178 aa).

Positions 104 to 166 (RRLQTIVYRK…PNSPMASENH (63 aa)) constitute an S4 RNA-binding domain. Residues 158–178 (NSPMASENHPERTAAVSEENQ) form a disordered region.

It belongs to the universal ribosomal protein uS4 family. As to quaternary structure, part of the 30S ribosomal subunit. Contacts protein S5. The interaction surface between S4 and S5 is involved in control of translational fidelity.

In terms of biological role, one of the primary rRNA binding proteins, it binds directly to 16S rRNA where it nucleates assembly of the body of the 30S subunit. With S5 and S12 plays an important role in translational accuracy. This Methanococcus maripaludis (strain C5 / ATCC BAA-1333) protein is Small ribosomal subunit protein uS4.